The following is a 632-amino-acid chain: Phosphomethylpyrimidine synthase (632 aa).

Substrate-binding positions include N237, M266, Y295, H331, 351 to 353, 392 to 395, and E431; these read SRG and DGLR. Zn(2+) is bound at residue H435. Y458 is a binding site for substrate. H499 serves as a coordination point for Zn(2+). [4Fe-4S] cluster contacts are provided by C579, C582, and C587.

It belongs to the ThiC family. As to quaternary structure, homodimer. The cofactor is [4Fe-4S] cluster.

The enzyme catalyses 5-amino-1-(5-phospho-beta-D-ribosyl)imidazole + S-adenosyl-L-methionine = 4-amino-2-methyl-5-(phosphooxymethyl)pyrimidine + CO + 5'-deoxyadenosine + formate + L-methionine + 3 H(+). It functions in the pathway cofactor biosynthesis; thiamine diphosphate biosynthesis. In terms of biological role, catalyzes the synthesis of the hydroxymethylpyrimidine phosphate (HMP-P) moiety of thiamine from aminoimidazole ribotide (AIR) in a radical S-adenosyl-L-methionine (SAM)-dependent reaction. This chain is Phosphomethylpyrimidine synthase, found in Chromobacterium violaceum (strain ATCC 12472 / DSM 30191 / JCM 1249 / CCUG 213 / NBRC 12614 / NCIMB 9131 / NCTC 9757 / MK).